We begin with the raw amino-acid sequence, 546 residues long: Arginine--tRNA ligase (546 aa).

Positions 122–132 match the 'HIGH' region motif; that stretch reads ANPTGPFTVGH.

It belongs to the class-I aminoacyl-tRNA synthetase family. Monomer.

Its subcellular location is the cytoplasm. The catalysed reaction is tRNA(Arg) + L-arginine + ATP = L-arginyl-tRNA(Arg) + AMP + diphosphate. The sequence is that of Arginine--tRNA ligase from Thermotoga petrophila (strain ATCC BAA-488 / DSM 13995 / JCM 10881 / RKU-1).